A 718-amino-acid chain; its full sequence is Cyclomaltodextrin glucanotransferase (718 aa).

A signal peptide spans 1-34; that stretch reads MFQMAKRAFLSTTLTLGLLAGSALPFLPASAAYA. The interval 35–172 is A1; sequence DPDIAVTNKQ…GIKIIIDFAP (138 aa). Ca(2+)-binding residues include Asp-61, Asn-63, Asn-66, and Asn-67. A disulfide bridge links Cys-77 with Cys-84. Positions 85 and 87 each coordinate Ca(2+). 134–135 contributes to the substrate binding site; sequence YW. Asn-173 is a Ca(2+) binding site. The segment at 173–236 is b; the sequence is NHTSPAMETD…NLYDLADFNH (64 aa). His-174 is a substrate binding site. Residue Ile-224 coordinates Ca(2+). 227–230 contributes to the substrate binding site; that stretch reads NLYD. Ca(2+) is bound at residue Asp-233. The segment at 237–440 is A2; that stretch reads NNATIDKYFK…LRKSNPAIAY (204 aa). Arg-261 contributes to the substrate binding site. Asp-263 acts as the Nucleophile in catalysis. Residue 266 to 267 participates in substrate binding; the sequence is KH. His-267 serves as a coordination point for Ca(2+). Glu-291 functions as the Proton donor in the catalytic mechanism. Residues His-361, Asp-405, and Arg-409 each contribute to the substrate site. The c stretch occupies residues 441–528; that stretch reads GSTQQRWINN…ATAVWQYTAA (88 aa). Residues 529 to 614 form a d region; sequence ETTPTIGHVG…SNAYNHFTIL (86 aa). The IPT/TIG domain maps to 532 to 612; it reads PTIGHVGPVM…VNSNAYNHFT (81 aa). The CBM20 domain maps to 613–718; it reads ILTGDQVTVR…GTATVTVNWQ (106 aa). The e stretch occupies residues 615-718; it reads TGDQVTVRFV…GTATVTVNWQ (104 aa).

It belongs to the glycosyl hydrolase 13 family. Monomer. Ca(2+) serves as cofactor.

The protein resides in the secreted. It carries out the reaction Cyclizes part of a (1-&gt;4)-alpha-D-glucan chain by formation of a (1-&gt;4)-alpha-D-glucosidic bond.. This chain is Cyclomaltodextrin glucanotransferase (cgt), found in Bacillus sp. (strain 6.6.3).